The primary structure comprises 362 residues: Probable tocopherol O-methyltransferase, chloroplastic (362 aa).

A chloroplast-targeting transit peptide spans 1 to 55 (MAHAAAATGALAPLHPLLRCTSRHLCASASPRAGLCLHHHRRRRRSSRRTKLAVR). Positions 141 to 150 (VVDVGCGIGG) are SAM motif I. Residues 204-212 (GQFDLVWSM) are SAM motif II. The tract at residues 231–240 (VAAPGARIII) is SAM motif III.

It belongs to the class I-like SAM-binding methyltransferase superfamily. gTMT family.

It localises to the plastid. The protein resides in the chloroplast. It carries out the reaction gamma-tocopherol + S-adenosyl-L-methionine = (+)-alpha-tocopherol + S-adenosyl-L-homocysteine + H(+). It catalyses the reaction delta-tocotrienol + S-adenosyl-L-methionine = beta-tocotrienol + S-adenosyl-L-homocysteine + H(+). The enzyme catalyses gamma-tocotrienol + S-adenosyl-L-methionine = alpha-tocotrienol + S-adenosyl-L-homocysteine + H(+). The catalysed reaction is delta-tocopherol + S-adenosyl-L-methionine = beta-tocopherol + S-adenosyl-L-homocysteine + H(+). It participates in cofactor biosynthesis; tocopherol biosynthesis. Functionally, involved in the synthesis of tocopherol (vitamin E). Methylates gamma- and delta-tocopherol to form beta- and alpha-tocopherol, respectively. The protein is Probable tocopherol O-methyltransferase, chloroplastic (VTE4) of Oryza sativa subsp. japonica (Rice).